The chain runs to 228 residues: tRNA (guanine-N(1)-)-methyltransferase (228 aa).

S-adenosyl-L-methionine contacts are provided by residues glycine 108 and 127-132 (VGDFIL).

The protein belongs to the RNA methyltransferase TrmD family. Homodimer.

Its subcellular location is the cytoplasm. The enzyme catalyses guanosine(37) in tRNA + S-adenosyl-L-methionine = N(1)-methylguanosine(37) in tRNA + S-adenosyl-L-homocysteine + H(+). Its function is as follows. Specifically methylates guanosine-37 in various tRNAs. The sequence is that of tRNA (guanine-N(1)-)-methyltransferase from Metamycoplasma arthritidis (strain 158L3-1) (Mycoplasma arthritidis).